Consider the following 423-residue polypeptide: Mannose-6-phosphate isomerase (423 aa).

An N-acetylalanine modification is found at Ala-2. 2 positions are modified to phosphoserine: Ser-102 and Ser-108. Zn(2+) is bound by residues Gln-110, His-112, Glu-137, and His-276. Residue Arg-295 is part of the active site.

It belongs to the mannose-6-phosphate isomerase type 1 family. Requires Zn(2+) as cofactor. In terms of tissue distribution, expressed in all tissues, but more abundant in heart, brain and skeletal muscle.

It localises to the cytoplasm. The catalysed reaction is D-mannose 6-phosphate = D-fructose 6-phosphate. It functions in the pathway nucleotide-sugar biosynthesis; GDP-alpha-D-mannose biosynthesis; alpha-D-mannose 1-phosphate from D-fructose 6-phosphate: step 1/2. Functionally, isomerase that catalyzes the interconversion of fructose-6-P and mannose-6-P and has a critical role in the supply of D-mannose derivatives required for many eukaryotic glycosylation reactions. The protein is Mannose-6-phosphate isomerase of Homo sapiens (Human).